The chain runs to 1549 residues: FERM and PDZ domain-containing protein 1 (1549 aa).

The region spanning 57–135 (TVTLDKDVLL…ALSITVVRCT (79 aa)) is the PDZ domain. An FERM domain is found at 181–496 (NVLKVYLENG…GYYRLFVDPA (316 aa)). 7 disordered regions span residues 554–618 (AREE…DDLD), 717–738 (SHLS…PPQW), 775–834 (YDAA…YAKS), 913–1046 (STNP…RSEI), 1097–1174 (SLDS…EAQE), 1231–1257 (LSPC…DDSP), and 1321–1347 (PETE…AGSQ). A compositionally biased stretch (polar residues) spans 717–730 (SHLSDSGSESTASR). An important for interaction with GPSM2 region spans residues 924-931 (EPETMETK). Positions 950-961 (PSNTENPVTTDG) are enriched in polar residues. The segment covering 962-980 (SSASIPHSPHHSNPGSSSP) has biased composition (low complexity). A compositionally biased stretch (basic and acidic residues) spans 1117–1130 (SGKDLGDSKGDRLD).

Interacts with GPSM1. Interacts with GPSM2.

It localises to the cytoplasm. The protein localises to the cytosol. Its subcellular location is the cell membrane. Functionally, stabilizes membrane-bound GPSM1, and thereby promotes its interaction with GNAI1. The sequence is that of FERM and PDZ domain-containing protein 1 (Frmpd1) from Mus musculus (Mouse).